The chain runs to 477 residues: UDP-N-acetylmuramate--L-alanine ligase (477 aa).

122 to 128 (GTHGKTT) serves as a coordination point for ATP.

It belongs to the MurCDEF family.

The protein resides in the cytoplasm. It catalyses the reaction UDP-N-acetyl-alpha-D-muramate + L-alanine + ATP = UDP-N-acetyl-alpha-D-muramoyl-L-alanine + ADP + phosphate + H(+). The protein operates within cell wall biogenesis; peptidoglycan biosynthesis. Functionally, cell wall formation. This is UDP-N-acetylmuramate--L-alanine ligase from Xanthomonas oryzae pv. oryzae (strain MAFF 311018).